Here is a 274-residue protein sequence, read N- to C-terminus: Chromatin modification-related protein YNG2 (274 aa).

Residues 121–194 (EDEMESGPDF…ASTEREGTLD (74 aa)) form a disordered region. The segment covering 166-180 (THREKSYNKGDDTAD) has biased composition (basic and acidic residues). Residues 215–264 (NLYCFCQRVSFGEMVACDGPNCKYEWFHYECVNLTEPPKGTWYCPDCKQE) form a PHD-type zinc finger. Zn(2+) contacts are provided by Cys-218, Cys-220, Cys-231, Cys-236, His-242, Cys-245, Cys-258, and Cys-261.

The protein belongs to the ING family. In terms of assembly, interacts with H3K4me3 and to a lesser extent with H3K4me2. Component of the NuA4 histone acetyltransferase complex.

The protein localises to the nucleus. Functionally, component of the NuA4 histone acetyltransferase complex which is involved in transcriptional activation of selected genes principally by acetylation of nucleosomal histone H4 and H2A. The NuA4 complex is also involved in DNA repair. Involved in cell cycle progression and meiosis. This Candida glabrata (strain ATCC 2001 / BCRC 20586 / JCM 3761 / NBRC 0622 / NRRL Y-65 / CBS 138) (Yeast) protein is Chromatin modification-related protein YNG2 (YNG2).